The following is a 402-amino-acid chain: S-adenosylmethionine synthase (402 aa).

Histidine 16 contributes to the ATP binding site. Position 18 (aspartate 18) interacts with Mg(2+). Glutamate 44 is a K(+) binding site. L-methionine contacts are provided by glutamate 57 and glutamine 103. The interval 103-113 is flexible loop; the sequence is QSPDIAQGVDT. Residues 178 to 180, 249 to 250, aspartate 258, 264 to 265, alanine 281, and lysine 285 contribute to the ATP site; these read DGK, KF, and RK. L-methionine is bound at residue aspartate 258. Position 289 (lysine 289) interacts with L-methionine.

Belongs to the AdoMet synthase family. Homotetramer; dimer of dimers. Requires Mg(2+) as cofactor. K(+) serves as cofactor.

It is found in the cytoplasm. The enzyme catalyses L-methionine + ATP + H2O = S-adenosyl-L-methionine + phosphate + diphosphate. Its pathway is amino-acid biosynthesis; S-adenosyl-L-methionine biosynthesis; S-adenosyl-L-methionine from L-methionine: step 1/1. Catalyzes the formation of S-adenosylmethionine (AdoMet) from methionine and ATP. The overall synthetic reaction is composed of two sequential steps, AdoMet formation and the subsequent tripolyphosphate hydrolysis which occurs prior to release of AdoMet from the enzyme. The chain is S-adenosylmethionine synthase from Mycolicibacterium gilvum (strain PYR-GCK) (Mycobacterium gilvum (strain PYR-GCK)).